Consider the following 506-residue polypeptide: Maturase K (506 aa).

The protein belongs to the intron maturase 2 family. MatK subfamily.

Its subcellular location is the plastid. The protein localises to the chloroplast. Its function is as follows. Usually encoded in the trnK tRNA gene intron. Probably assists in splicing its own and other chloroplast group II introns. The sequence is that of Maturase K from Rhododendron tomentosum (Marsh Labrador tea).